Consider the following 189-residue polypeptide: Interferon alpha-6 (189 aa).

The first 23 residues, 1–23 (MARLCAFLMVLAVLSYWPTCSLG), serve as a signal peptide directing secretion. 2 cysteine pairs are disulfide-bonded: Cys-24–Cys-122 and Cys-52–Cys-162. N-linked (GlcNAc...) asparagine glycosylation occurs at Asn-101.

It belongs to the alpha/beta interferon family.

Its subcellular location is the secreted. Its function is as follows. Produced by macrophages, IFN-alpha have antiviral activities. Interferon stimulates the production of two enzymes: a protein kinase and an oligoadenylate synthetase. The protein is Interferon alpha-6 (Ifna6) of Mus musculus (Mouse).